The sequence spans 395 residues: Cytochrome b561 and DOMON domain-containing protein At5g47530 (395 aa).

The signal sequence occupies residues 1–24 (MAISSNLLLCLSLFIFIITKSALA). Residues 47–162 (LDSFLHYTYD…GIINTVWQDG (116 aa)) form the DOMON domain. Residues 176 to 371 (GNNVRSVSTL…LEGFTWYVVI (196 aa)) form the Cytochrome b561 domain. 2 consecutive transmembrane segments (helical) span residues 210 to 230 (IHGILNGVSWGIMMPIGAIIA) and 242 to 262 (AWFYLHVFCQSSAYIIGVAGW). Heme b contacts are provided by H211, H247, and H280. The chain crosses the membrane as a helical span at residues 282 to 302 (AVGIALFCLATIQVFAMFLRP). Residue H316 participates in heme b binding. A run of 2 helical transmembrane segments spans residues 318-338 (TVGYSVIILAVVNVFKGLDIL) and 351-371 (IIVVLGIVAVVLEGFTWYVVI).

The cofactor is heme b.

The protein localises to the membrane. Functionally, may act as a catecholamine-responsive trans-membrane electron transporter. The sequence is that of Cytochrome b561 and DOMON domain-containing protein At5g47530 from Arabidopsis thaliana (Mouse-ear cress).